Consider the following 1026-residue polypeptide: Unconventional myosin-Ic (1026 aa).

N-acetylmethionine is present on Met1. The Myosin motor domain maps to 12–695; that stretch reads GVQDFLLLEN…TLFITEDALE (684 aa). Residues Asn53, Tyr61, 104–113, and 157–161 each bind ATP; these read SGESGAGKTE and NDNSS. Lys349 is subject to N6-methyllysine. The actin-binding stretch occupies residues 572–594; that stretch reads LAKLMDILMSKEPSYVRCIKPND. 2 IQ domains span residues 698–727 and 721–750; these read KQTI…AVIV and IRHA…AADT. A TH1 domain is found at 849-1024; it reads KDGYSRSVPK…NGHLSVTTPR (176 aa).

The protein belongs to the TRAFAC class myosin-kinesin ATPase superfamily. Myosin family. In terms of assembly, interacts (via its IQ motifs) with calm.

The protein resides in the cytoplasm. It is found in the cell cortex. It localises to the cell projection. The protein localises to the ruffle membrane. Its subcellular location is the cytoplasmic vesicle. The protein resides in the stereocilium membrane. Functionally, myosins are actin-based motor molecules with ATPase activity. Unconventional myosins serve in intracellular movements. Their highly divergent tails are presumed to bind to membranous compartments, which would be moved relative to actin filaments. The protein is Unconventional myosin-Ic (myo1c) of Danio rerio (Zebrafish).